Reading from the N-terminus, the 321-residue chain is Replication factor C small subunit (321 aa).

An ATP-binding site is contributed by 46-53 (GPAGVGKT).

This sequence belongs to the activator 1 small subunits family. RfcS subfamily. As to quaternary structure, heterohexamer composed of four small subunits (RfcS) and two large subunits (RfcL).

Part of the RFC clamp loader complex which loads the PCNA sliding clamp onto DNA. The complex possesses DNA-dependent ATPase activity which is further stimulated by PCNA. In conjunction with PCNA stimulates DNA synthesis by PolB, relieving inhibition by replication protein A (RPA). The polypeptide is Replication factor C small subunit (rfcS) (Methanothermobacter thermautotrophicus (strain ATCC 29096 / DSM 1053 / JCM 10044 / NBRC 100330 / Delta H) (Methanobacterium thermoautotrophicum)).